The following is a 209-amino-acid chain: MKRTYPEPTPIYHITHIDNLKGILRMGKLLAHNQSPPKQRSIAYAHIQERRNRAKVPQPPGGVLHDYVPFYFCPRSPMLYAIYSGATEYQGGQEPILHLVSSAQAVHKAGLPFVFTDRHGVLSHARFFRQLEELAQLDWEAIQASYWADPPELREKKQAEFLVYKAFPWALIEEIAVYSQRVGEEVLKILKQFPEARRPRVCIRKDWYY.

The DarT domain occupies 9 to 209; it reads TPIYHITHID…RVCIRKDWYY (201 aa). NAD(+) is bound by residues 13–15, Gly-22, and Leu-30; that span reads HIT. Residues 35 to 53 form an NAD(+)-binding element region; that stretch reads SPPKQRSIAYAHIQERRNR. Residues 44–50 mediate DNA binding; sequence YAHIQER. Arg-51 lines the NAD(+) pocket. The active-site Proton acceptor is the Arg-51. 3 consecutive DNA-binding regions follow at residues 75 to 80, 145 to 148, and 154 to 158; these read RSPMLY, SYWA, and REKKQ. The tract at residues 116–160 is ADP-ribosylating turn-turn loop; sequence TDRHGVLSHARFFRQLEELAQLDWEAIQASYWADPPELREKKQAE. Glu-160 is a catalytic residue.

It belongs to the DarT ADP-ribosyltransferase family. As to quaternary structure, interacts with cognate antitoxin DarG (via C-terminus); this heterodimeric complex neutralizes the toxic effect of DarT by preventing ssDNA binding to DarT and consequently inactivating the toxin by direct protein-protein interactions.

The enzyme catalyses a thymidine in DNA + NAD(+) = an N-(ADP-alpha-D-ribosyl)-thymidine in DNA + nicotinamide + H(+). In terms of biological role, toxic component of the hybrid type II/IV toxin-antitoxin (TA) system DarTG, which plays a crucial role in controlling bacterial growth and bacteriophage infection. In case of phage infection, DarT toxin ADP-ribosylates DNA, which inhibits both viral DNA and RNA synthesis and leads to abortive infection. ADP-ribosylates ssDNA on the second thymidine of the consensus sequence 5'-TNTC-3'; the protein does not auto-modify. Arg-51 is highly flexible, allowing it to assume multiple positions in the crystal structures. Its toxic effect is neutralized by cognate antitoxin DarG. This chain is DNA ADP-ribosyl transferase, found in Thermus sp. (strain 2.9).